A 360-amino-acid polypeptide reads, in one-letter code: Protein NDRG2 (360 aa).

Residues 324 to 360 are disordered; that stretch reads SRTASLSSEGNRSRSRTLSQSSESGGGPPAPLAEVTC.

It belongs to the NDRG family.

It is found in the cytoplasm. Its function is as follows. Contributes to the regulation of the Wnt signaling pathway. Down-regulates CTNNB1-mediated transcriptional activation of target genes. May be involved in neuron differentiation. The protein is Protein NDRG2 (ndrg2) of Xenopus laevis (African clawed frog).